The chain runs to 471 residues: Alkaline phosphatase (471 aa).

The first 21 residues, 1–21, serve as a signal peptide directing secretion; the sequence is MKQSTIALALLPLLFTPVTKA. Mg(2+) is bound at residue D73. D73 serves as a coordination point for Zn(2+). The active-site Phosphoserine intermediate is S124. Residues D175 and T177 each coordinate Mg(2+). 2 disulfides stabilise this stretch: C190–C200 and C308–C358. E344 lines the Mg(2+) pocket. Zn(2+) is bound by residues D349, H353, D391, H392, and H434.

This sequence belongs to the alkaline phosphatase family. Isozymes 1 and 3 are a dimer of identical chains, isozyme 2 is a dimer of heterogeneous chains, one of each of the subunits from isozymes 1 and 3. The cofactor is Mg(2+). It depends on Zn(2+) as a cofactor.

It is found in the periplasm. It carries out the reaction a phosphate monoester + H2O = an alcohol + phosphate. This is Alkaline phosphatase (phoA) from Escherichia coli (strain K12).